The sequence spans 237 residues: Phosphoribosylaminoimidazole-succinocarboxamide synthase (237 aa).

The protein belongs to the SAICAR synthetase family.

The catalysed reaction is 5-amino-1-(5-phospho-D-ribosyl)imidazole-4-carboxylate + L-aspartate + ATP = (2S)-2-[5-amino-1-(5-phospho-beta-D-ribosyl)imidazole-4-carboxamido]succinate + ADP + phosphate + 2 H(+). The protein operates within purine metabolism; IMP biosynthesis via de novo pathway; 5-amino-1-(5-phospho-D-ribosyl)imidazole-4-carboxamide from 5-amino-1-(5-phospho-D-ribosyl)imidazole-4-carboxylate: step 1/2. This is Phosphoribosylaminoimidazole-succinocarboxamide synthase from Hamiltonella defensa subsp. Acyrthosiphon pisum (strain 5AT).